The sequence spans 197 residues: UPF0462 protein C4orf33 homolog (197 aa).

It belongs to the UPF0462 family.

This chain is UPF0462 protein C4orf33 homolog, found in Danio rerio (Zebrafish).